The sequence spans 78 residues: Large ribosomal subunit protein bL28 (78 aa).

The interval 1–22 (MAKVCQVTGKRPVTGHNVSHAK) is disordered.

It belongs to the bacterial ribosomal protein bL28 family.

The protein is Large ribosomal subunit protein bL28 of Teredinibacter turnerae (strain ATCC 39867 / T7901).